The chain runs to 180 residues: Negative modulator of initiation of replication (180 aa).

Residues 115 to 119 are interaction with DNA; sequence RTRVY.

The protein belongs to the SeqA family. In terms of assembly, homodimer. Polymerizes to form helical filaments.

The protein resides in the cytoplasm. In terms of biological role, negative regulator of replication initiation, which contributes to regulation of DNA replication and ensures that replication initiation occurs exactly once per chromosome per cell cycle. Binds to pairs of hemimethylated GATC sequences in the oriC region, thus preventing assembly of replication proteins and re-initiation at newly replicated origins. Repression is relieved when the region becomes fully methylated. This chain is Negative modulator of initiation of replication, found in Aliivibrio fischeri (strain ATCC 700601 / ES114) (Vibrio fischeri).